Reading from the N-terminus, the 496-residue chain is Ankyrin repeat domain-containing protein 53 (496 aa).

Residues 1 to 15 show a composition bias toward low complexity; that stretch reads MASAGSTARRAGSGS. The disordered stretch occupies residues 1–66; the sequence is MASAGSTARR…RPSEESDQTT (66 aa). Basic and acidic residues predominate over residues 51–60; it reads AESKQPRPSE. ANK repeat units follow at residues 105–135, 139–172, and 176–205; these read KGFTAIHFAAQRGKLACLQVLVEEYKFPVNL, NSQTPLHLVIHKDNTTVALPCIYYLLEKGAALNA, and NGCTPLHLAVREGLLDCVKVLVQSGANVHA. Residues 292–320 are disordered; that stretch reads LVSNTKQARATALSKTPEQRGSQCSSSFH.

In terms of assembly, interacts with PSRC1; recruited by PSRC1 to the spindle during mitosis. In terms of processing, phosphorylated during mitosis.

It is found in the cytoplasm. The protein localises to the cytoskeleton. It localises to the spindle. Its subcellular location is the spindle pole. Required for normal progression through mitosis. Involved in chromosome alignment and cytokinesis via regulation of microtubules polymerization. The chain is Ankyrin repeat domain-containing protein 53 (ANKRD53) from Macaca fascicularis (Crab-eating macaque).